The chain runs to 116 residues: Large ribosomal subunit protein bL19 (116 aa).

The protein belongs to the bacterial ribosomal protein bL19 family.

Its function is as follows. This protein is located at the 30S-50S ribosomal subunit interface and may play a role in the structure and function of the aminoacyl-tRNA binding site. This Nocardioides sp. (strain ATCC BAA-499 / JS614) protein is Large ribosomal subunit protein bL19.